Consider the following 341-residue polypeptide: O(6)-methylguanine-induced apoptosis 2 (341 aa).

Polar residues predominate over residues 1–10 (MSQKFANTGS). A disordered region spans residues 1–23 (MSQKFANTGSFIEREDLGKPNKG). Residues 12–23 (IEREDLGKPNKG) show a composition bias toward basic and acidic residues. STPGR repeat units follow at residues 73–80 (PGPGFYNV), 115–123 (PAANAYTIR), 154–160 (PAPNHYN), 194–213 (GPAP…SPKV), 232–254 (GPGP…HLPK), 273–284 (LPGPGQYEIVNY), and 313–323 (LPGPASYKPEI). At Tyr78 the chain carries Phosphotyrosine.

This sequence belongs to the STPG1 family.

It localises to the cytoplasm. Its subcellular location is the nucleus. Its function is as follows. May positively contribute to the induction of apoptosis triggered by O(6)-methylguanine. The protein is O(6)-methylguanine-induced apoptosis 2 (Stpg1) of Rattus norvegicus (Rat).